The primary structure comprises 557 residues: 2,3-bisphosphoglycerate-independent phosphoglycerate mutase 1 (557 aa).

Mn(2+) contacts are provided by D27 and S80. The Phosphoserine intermediate role is filled by S80. Substrate is bound by residues H139, 169-170, R205, R212, 285-288, and K360; these read RD and RADR. The Mn(2+) site is built by D429, H433, D470, H471, and H500.

The protein belongs to the BPG-independent phosphoglycerate mutase family. In terms of assembly, monomer. Mn(2+) is required as a cofactor.

The protein resides in the cytoplasm. It carries out the reaction (2R)-2-phosphoglycerate = (2R)-3-phosphoglycerate. It functions in the pathway carbohydrate degradation; glycolysis; pyruvate from D-glyceraldehyde 3-phosphate: step 3/5. Catalyzes the interconversion of 2-phosphoglycerate (2-PGA) and 3-phosphoglycerate (3-PGA). Required for guard cell function (e.g. blue light-, abscisic acid- (ABA), and low CO(2)-regulated stomatal movements) and fertility (e.g. pollen grains production). The protein is 2,3-bisphosphoglycerate-independent phosphoglycerate mutase 1 (PGM1) of Arabidopsis thaliana (Mouse-ear cress).